Reading from the N-terminus, the 154-residue chain is Small heat shock protein C2 (154 aa).

The region spanning 43 to 154 (STEKNLIPRT…GKTRKIEVKG (112 aa)) is the sHSP domain.

Belongs to the small heat shock protein (HSP20) family.

The polypeptide is Small heat shock protein C2 (hspC2) (Rickettsia felis (strain ATCC VR-1525 / URRWXCal2) (Rickettsia azadi)).